A 414-amino-acid chain; its full sequence is N-carbamoyl-L-amino-acid amidohydrolase (414 aa).

A divalent metal cation is bound by residues histidine 83, aspartate 94, glutamate 129, and histidine 195. An N-carbamoyl-L-alpha-amino acid-binding residues include glutamine 198, histidine 231, asparagine 281, arginine 294, and glycine 363. Residues 214 to 333 (GIAGPSWFKV…QIEKNMAAVP (120 aa)) are involved in dimerization. An a divalent metal cation-binding site is contributed by histidine 388.

The protein belongs to the peptidase M20 family. Homodimer. Requires Mn(2+) as cofactor. Ni(2+) is required as a cofactor. Co(2+) serves as cofactor. The cofactor is Fe(2+).

The enzyme catalyses an N-carbamoyl-L-alpha-amino acid + H2O + 2 H(+) = an L-alpha-amino acid + NH4(+) + CO2. It carries out the reaction N-carbamoyl-L-methionine + H2O + 2 H(+) = L-methionine + NH4(+) + CO2. Functionally, catalyzes the hydrolysis of N-carbamoyl-L-alpha-amino acids to free L-alpha-amino acids. Is strictly L-specific since it is inactive toward N-carbamoyl-D-alpha-amino acids. This Pseudomonas sp. (strain NS671) protein is N-carbamoyl-L-amino-acid amidohydrolase.